The chain runs to 375 residues: Tubulinyl-Tyr carboxypeptidase 1 (375 aa).

The segment covering Met1 to Ala33 has biased composition (low complexity). Positions Met1–Pro69 are disordered. The span at Glu53–Leu63 shows a compositional bias: acidic residues. Residues Cys179, His214, and Ser231 contribute to the active site. Positions Arg309 to Val375 are disordered. An involved in heparin-binding and antiangiogenic activity region spans residues Lys329–Val375. A compositionally biased stretch (basic and acidic residues) spans Ser347–Glu361.

Belongs to the transglutaminase-like superfamily. Vasohibin family. Interacts with SVBP; interaction enhances VASH1 tyrosine carboxypeptidase activity. Post-translationally, ubiquitinated in vitro. Expressed at low level in proliferating endothelial cells at the sprouting front but highly expressed in nonproliferating endothelial cells in the termination zone.

It is found in the cytoplasm. The protein resides in the secreted. It carries out the reaction C-terminal L-alpha-aminoacyl-L-glutamyl-L-glutamyl-L-tyrosyl-[tubulin] + H2O = C-terminal L-alpha-aminoacyl-L-glutamyl-L-glutamyl-[tubulin] + L-tyrosine. Tyrosine carboxypeptidase that removes the C-terminal tyrosine residue of alpha-tubulin, thereby regulating microtubule dynamics and function. Acts as an angiogenesis inhibitor: inhibits migration, proliferation and network formation by endothelial cells as well as angiogenesis. This inhibitory effect is selective to endothelial cells as it does not affect the migration of smooth muscle cells or fibroblasts. The polypeptide is Tubulinyl-Tyr carboxypeptidase 1 (Mus musculus (Mouse)).